Reading from the N-terminus, the 32-residue chain is Chaperone protein DnaK (32 aa).

The protein belongs to the heat shock protein 70 family.

In terms of biological role, acts as a chaperone. The chain is Chaperone protein DnaK from Anabaena sp. (strain L31).